The sequence spans 299 residues: Very long chain fatty acid elongase 5 (299 aa).

The residue at position 1 (M1) is an N-acetylmethionine. 7 consecutive transmembrane segments (helical) span residues 26–46 (WFLL…LLIV), 64–84 (ILVV…CELV), 112–132 (VLWW…FFIL), 139–158 (ITVL…WFVM), 168–187 (FGAT…YGLS), 205–225 (GQLL…IWPC), and 226–246 (TFPL…ITLF). A Phosphoserine modification is found at S285.

This sequence belongs to the ELO family. ELOVL5 subfamily. In terms of assembly, interacts with TECR.

Its subcellular location is the endoplasmic reticulum membrane. It is found in the cell projection. The protein resides in the dendrite. The enzyme catalyses a very-long-chain acyl-CoA + malonyl-CoA + H(+) = a very-long-chain 3-oxoacyl-CoA + CO2 + CoA. It carries out the reaction (6Z,9Z,12Z)-octadecatrienoyl-CoA + malonyl-CoA + H(+) = (8Z,11Z,14Z)-3-oxoeicosatrienoyl-CoA + CO2 + CoA. The catalysed reaction is (9Z,12Z,15Z)-octadecatrienoyl-CoA + malonyl-CoA + H(+) = (11Z,14Z,17Z)-3-oxoeicosatrienoyl-CoA + CO2 + CoA. It catalyses the reaction (9Z)-hexadecenoyl-CoA + malonyl-CoA + H(+) = 3-oxo-(11Z)-octadecenoyl-CoA + CO2 + CoA. The enzyme catalyses (9Z)-octadecenoyl-CoA + malonyl-CoA + H(+) = 3-oxo-(11Z)-eicosenoyl-CoA + CO2 + CoA. It carries out the reaction (11Z)-octadecenoyl-CoA + malonyl-CoA + H(+) = 3-oxo-(13Z)-eicosenoyl-CoA + CO2 + CoA. The catalysed reaction is (9Z,12Z)-octadecadienoyl-CoA + malonyl-CoA + H(+) = (11Z,14Z)-3-oxoicosa-11,14-dienoyl-CoA + CO2 + CoA. It catalyses the reaction (6Z,9Z,12Z,15Z)-octadecatetraenoyl-CoA + malonyl-CoA + H(+) = (8Z,11Z,14Z,17Z)-3-oxoicosatetraenoyl-CoA + CO2 + CoA. The enzyme catalyses (5Z,8Z,11Z,14Z)-eicosatetraenoyl-CoA + malonyl-CoA + H(+) = (7Z,10Z,13Z,16Z)-3-oxodocosatetraenoyl-CoA + CO2 + CoA. It carries out the reaction (5Z,8Z,11Z,14Z,17Z)-eicosapentaenoyl-CoA + malonyl-CoA + H(+) = 3-oxo-(7Z,10Z,13Z,16Z,19Z)-docosapentaenoyl-CoA + CO2 + CoA. It participates in lipid metabolism; polyunsaturated fatty acid biosynthesis. In terms of biological role, catalyzes the first and rate-limiting reaction of the four reactions that constitute the long-chain fatty acids elongation cycle. This endoplasmic reticulum-bound enzymatic process allows the addition of 2 carbons to the chain of long- and very long-chain fatty acids (VLCFAs) per cycle. Condensing enzyme that acts specifically toward polyunsaturated acyl-CoA with the higher activity toward C18:3(n-6) acyl-CoA. May participate in the production of monounsaturated and of polyunsaturated VLCFAs of different chain lengths that are involved in multiple biological processes as precursors of membrane lipids and lipid mediators. In conditions where the essential linoleic and alpha linoleic fatty acids are lacking it is also involved in the synthesis of Mead acid from oleic acid. The protein is Very long chain fatty acid elongase 5 of Bos taurus (Bovine).